A 334-amino-acid chain; its full sequence is Lipoyl synthase (334 aa).

The interval 1 to 36 (MSDALIAPNASSSEAPQSPAEHYDPTRKQKSADKTA) is disordered. The span at 7–20 (APNASSSEAPQSPA) shows a compositional bias: low complexity. The span at 21–36 (EHYDPTRKQKSADKTA) shows a compositional bias: basic and acidic residues. 7 residues coordinate [4Fe-4S] cluster: cysteine 81, cysteine 86, cysteine 92, cysteine 107, cysteine 111, cysteine 114, and serine 321. The region spanning 92–310 (CFGKGTATFM…EEEAYKMGFT (219 aa)) is the Radical SAM core domain.

The protein belongs to the radical SAM superfamily. Lipoyl synthase family. It depends on [4Fe-4S] cluster as a cofactor.

It is found in the cytoplasm. The enzyme catalyses [[Fe-S] cluster scaffold protein carrying a second [4Fe-4S](2+) cluster] + N(6)-octanoyl-L-lysyl-[protein] + 2 oxidized [2Fe-2S]-[ferredoxin] + 2 S-adenosyl-L-methionine + 4 H(+) = [[Fe-S] cluster scaffold protein] + N(6)-[(R)-dihydrolipoyl]-L-lysyl-[protein] + 4 Fe(3+) + 2 hydrogen sulfide + 2 5'-deoxyadenosine + 2 L-methionine + 2 reduced [2Fe-2S]-[ferredoxin]. Its pathway is protein modification; protein lipoylation via endogenous pathway; protein N(6)-(lipoyl)lysine from octanoyl-[acyl-carrier-protein]: step 2/2. Its function is as follows. Catalyzes the radical-mediated insertion of two sulfur atoms into the C-6 and C-8 positions of the octanoyl moiety bound to the lipoyl domains of lipoate-dependent enzymes, thereby converting the octanoylated domains into lipoylated derivatives. The protein is Lipoyl synthase of Cupriavidus taiwanensis (strain DSM 17343 / BCRC 17206 / CCUG 44338 / CIP 107171 / LMG 19424 / R1) (Ralstonia taiwanensis (strain LMG 19424)).